A 642-amino-acid chain; its full sequence is AEKIKICLQKQVNSSFSLHNVFGGNLYATEEKRMFELVKPKAGASVLNQSTWICFGDSRTDQSNSAFPRSADVSAKTAEKFRSLSGGSLMLSMFGPPGKVDYLYQGCGKHKVFYEGVNWSPHAAIDCYRKNWTDIKLNFQKSIYELASQSHCMSLVNALDKTIPLQATKGVAKNCNNSFLKNPALYTQEVKPLEQICGEENLAFFTLPTQFGTYECKLHLVASCYFIYDSKEVYNKRGCGNYFQVIYDSSGKVVGGLDNRVSPYTGNSGDTPTMQCDMLQLKPGRYSVRSSPRFLLMPERSYCFDMKEKGLVTAVQSIWGKGRKSDYAVDQACLSTPGCMLIQKQKPYIGEADDHHGDQEMRELLSGLDYEARCISQSGWVNETSPFTEEYLLPPKFGRCPLAAKEESIPKIPDGLLIPTSGTDTTVTKPKSRIFGIDDLIIGLFFVAIVEAGIGGYLLGSRKESGGGVTKESAEKGFEKIGNDIQILRSSTNIAIEKLNDRISHDEQAIRDLTLEIENARSEALLGELGIIRALLVGNISIGLQESLWELASEITNRAGDLAVEVSPGCWIIDNNICDQSCQNFIFKFNETAPVPTIPPLDTKIDLQSDPFYWGSSLGLAITTPISLAALVISGIAICRTK.

Position 1 (A1) is a region of interest, fusion domain-1. The esterase domain-1 stretch occupies residues 1-83 (AEKIKICLQK…SAKTAEKFRS (83 aa)). Topologically, residues 1–617 (AEKIKICLQK…QSDPFYWGSS (617 aa)) are extracellular. N13, N48, N131, and N176 each carry an N-linked (GlcNAc...) asparagine; by host glycan. Residues 83-297 (SLSGGSLMLS…VRSSPRFLLM (215 aa)) are N-acetyl-9-O-acetylneuraminic acid binding. 3 disulfides stabilise this stretch: C197–C239, C216–C303, and C224–C276. Residues 297 to 351 (MPERSYCFDMKEKGLVTAVQSIWGKGRKSDYAVDQACLSTPGCMLIQKQKPYIGE) form an esterase domain-2 region. Residues 352–637 (ADDHHGDQEM…LAALVISGIA (286 aa)) are fusion domain-2. Catalysis depends on charge relay system residues D353 and H356. Residues N382, N539, and N590 are each glycosylated (N-linked (GlcNAc...) asparagine; by host). The helical transmembrane segment at 618-638 (LGLAITTPISLAALVISGIAI) threads the bilayer. Residues 639–642 (CRTK) are Cytoplasmic-facing.

This sequence belongs to the influenza viruses hemagglutinin family. Homotrimer of disulfide-linked HEF1-HEF2. In terms of processing, in natural infection, inactive HEF is matured into HEF1 and HEF2 outside the cell by one or more trypsin-like, arginine-specific endoprotease.

The protein resides in the virion membrane. It is found in the host cell membrane. The enzyme catalyses N-acetyl-9-O-acetylneuraminate + H2O = N-acetylneuraminate + acetate + H(+). It carries out the reaction N-acetyl-4-O-acetylneuraminate + H2O = N-acetylneuraminate + acetate + H(+). Binds to the N-acetyl-9-O-acetylneuraminic acid residues on the cell surface, bringing about the attachment of the virus particle to the cell. Plays a major role in the determination of host range restriction and virulence. Class I viral fusion protein. Responsible for penetration of the virus into the cell cytoplasm by mediating the fusion of the membrane of the endocytosed virus particle with the endosomal membrane. Low pH in endosomes induce an irreversible conformational change in HEF2, releasing the fusion hydrophobic peptide. Several trimers are required to form a competent fusion pore. Displays a receptor-destroying activity which is a neuraminidate-O-acetyl esterase. This activity cleaves off any receptor on the cell surface, which would otherwise prevent virions release. These cleavages prevent self-aggregation and ensure the efficient spread of the progeny virus from cell to cell. The sequence is that of Hemagglutinin-esterase-fusion glycoprotein from Influenza C virus (strain C/Pig/Beijing/10/1981).